Reading from the N-terminus, the 474-residue chain is MPGTALSPLLLLLLLSWASRNEAAPDQDEIDCLPGLAKQPSFRQYSGYLRASDSKHFHYWFVESQNDPKNSPVVLWLNGGPGCSSLDGLLTEHGPFLIQPDGVTLEYNPYAWNLIANVLYIESPAGVGFSYSDDKMYVTNDTEVAENNYEALKDFFRLFPEYKDNKLFLTGESYAGIYIPTLAVLVMQDPSMNLQGLAVGNGLASYEQNDNSLVYFAYYHGLLGNRLWTSLQTHCCAQNKCNFYDNKDPECVNNLLEVSRIVGKSGLNIYNLYAPCAGGVPGRHRYEDTLVVQDFGNIFTRLPLKRRFPEALMRSGDKVRLDPPCTNTTAPSNYLNNPYVRKALHIPESLPRWDMCNFLVNLQYRRLYQSMNSQYLKLLSSQKYQILLYNGDVDMACNFMGDEWFVDSLNQKMEVQRRPWLVDYGESGEQVAGFVKECSHITFLTIKGAGHMVPTDKPRAAFTMFSRFLNKEPY.

The N-terminal stretch at 1–23 is a signal peptide; it reads MPGTALSPLLLLLLLSWASRNEA. 4 disulfides stabilise this stretch: Cys-83-Cys-356, Cys-235-Cys-251, Cys-236-Cys-241, and Cys-276-Cys-325. Asn-140 carries N-linked (GlcNAc...) (high mannose) asparagine glycosylation. Ser-173 is a catalytic residue. A glycan (N-linked (GlcNAc...) (high mannose) asparagine) is linked at Asn-327. Active-site residues include Asp-394 and His-451.

Belongs to the peptidase S10 family. As to quaternary structure, heterodimer of a 32 kDa chain and a 20 kDa chain; disulfide-linked.

The protein localises to the lysosome. It catalyses the reaction Release of a C-terminal amino acid with broad specificity.. In terms of biological role, protective protein appears to be essential for both the activity of beta-galactosidase and neuraminidase, it associates with these enzymes and exerts a protective function necessary for their stability and activity. This protein is also a carboxypeptidase and can deamidate tachykinins. In Mus musculus (Mouse), this protein is Lysosomal protective protein (Ctsa).